Here is a 243-residue protein sequence, read N- to C-terminus: Leucyl/phenylalanyl-tRNA--protein transferase (243 aa).

The segment at 1 to 22 is disordered; the sequence is MHSQPYLLSPTPNTPFPPAEHA.

The protein belongs to the L/F-transferase family.

It is found in the cytoplasm. It catalyses the reaction N-terminal L-lysyl-[protein] + L-leucyl-tRNA(Leu) = N-terminal L-leucyl-L-lysyl-[protein] + tRNA(Leu) + H(+). The enzyme catalyses N-terminal L-arginyl-[protein] + L-leucyl-tRNA(Leu) = N-terminal L-leucyl-L-arginyl-[protein] + tRNA(Leu) + H(+). The catalysed reaction is L-phenylalanyl-tRNA(Phe) + an N-terminal L-alpha-aminoacyl-[protein] = an N-terminal L-phenylalanyl-L-alpha-aminoacyl-[protein] + tRNA(Phe). Its function is as follows. Functions in the N-end rule pathway of protein degradation where it conjugates Leu, Phe and, less efficiently, Met from aminoacyl-tRNAs to the N-termini of proteins containing an N-terminal arginine or lysine. The sequence is that of Leucyl/phenylalanyl-tRNA--protein transferase from Xylella fastidiosa (strain M23).